We begin with the raw amino-acid sequence, 375 residues long: Stomatin-2 (375 aa).

Positions 1-75 (MKTQPSEESA…IPVPTGQPRG (75 aa)) are disordered. Residues 11–50 (SPAPVNPGNSGNSGNRRASSTRISFSDQLDGGDSGDSSSN) are compositionally biased toward low complexity. The helical transmembrane segment at 120 to 140 (GLGFCGWFLMGLSWIMVISTF) threads the bilayer.

The protein belongs to the band 7/mec-2 family.

It localises to the membrane. Its function is as follows. May be involved in cilia-related function. The polypeptide is Stomatin-2 (sto-2) (Caenorhabditis elegans).